A 760-amino-acid chain; its full sequence is Forkhead box protein M1 (760 aa).

Disordered regions lie at residues 1 to 54 (MRTS…AESS) and 95 to 167 (GKES…SYAG). 2 stretches are compositionally biased toward low complexity: residues 43-54 (PAQASQEVAESS) and 110-124 (SSGG…PQAH). A compositionally biased stretch (basic and acidic residues) spans 125–134 (SSRDSKRAEV). Low complexity predominate over residues 140-149 (GPKPAAKGVP). Glycyl lysine isopeptide (Lys-Gly) (interchain with G-Cter in SUMO2) cross-links involve residues Lys-199 and Lys-323. Residues 233 to 325 (ERPPYSYMAM…LTLDQVFKPL (93 aa)) constitute a DNA-binding region (fork-head). The segment at 323–348 (KPLEPGSPQSPEHLESQQKRPNPELH) is disordered. Ser-329 carries the post-translational modification Phosphoserine. Residues 334–348 (EHLESQQKRPNPELH) are compositionally biased toward basic and acidic residues. Residue Lys-354 forms a Glycyl lysine isopeptide (Lys-Gly) (interchain with G-Cter in SUMO2) linkage. Ser-374 is subject to Phosphoserine; by CHEK2. Glycyl lysine isopeptide (Lys-Gly) (interchain with G-Cter in SUMO2) cross-links involve residues Lys-420 and Lys-438. Disordered stretches follow at residues 500-560 (SWED…PDLF), 577-635 (ESSE…LDFS), and 660-709 (PLKS…IPSL). Phosphoserine is present on Ser-521. Basic and acidic residues predominate over residues 531-542 (VTKRREKREVSR). Positions 604–613 (PVSSTPSKSV) are enriched in polar residues. Thr-608 bears the Phosphothreonine; by CDK1 mark. Thr-624 carries the post-translational modification Phosphothreonine. 2 positions are modified to phosphoserine; by PLK1: Ser-727 and Ser-736.

Phosphorylated in M (mitotic) phase. Phosphorylation by the checkpoint kinase CHEK2 in response to DNA damage increases the FOXM1 protein stability probably stimulating the transcription of genes involved in DNA repair. Phosphorylated by CDK1 in late S and G2 phases, creating docking sites for the POLO box domains of PLK1. Subsequently, PLK1 binds and phosphorylates FOXM1, leading to activation of transcriptional activity and subsequent enhanced expression of key mitotic regulators. Phosphorylated by GSK3B leading to ubiquitination and proteasomal degradation. In terms of tissue distribution, expressed in fetal heart, brain, liver, lung, kidney and limb, but only in adult thymus. Appears to be expressed only in adult organs containing proliferating/cycling cells or in response to growth factors.

Its subcellular location is the nucleus. In terms of biological role, transcription factor regulating the expression of cell cycle genes essential for DNA replication and mitosis. Plays a role in the control of cell proliferation. Also plays a role in DNA break repair, participating in the DNA damage checkpoint response. Promotes transcription of PHB2. In Mus musculus (Mouse), this protein is Forkhead box protein M1 (Foxm1).